The primary structure comprises 273 residues: Tryptophan synthase alpha chain (273 aa).

Residues E56 and D67 each act as proton acceptor in the active site.

It belongs to the TrpA family. In terms of assembly, tetramer of two alpha and two beta chains.

It carries out the reaction (1S,2R)-1-C-(indol-3-yl)glycerol 3-phosphate + L-serine = D-glyceraldehyde 3-phosphate + L-tryptophan + H2O. It participates in amino-acid biosynthesis; L-tryptophan biosynthesis; L-tryptophan from chorismate: step 5/5. Functionally, the alpha subunit is responsible for the aldol cleavage of indoleglycerol phosphate to indole and glyceraldehyde 3-phosphate. This chain is Tryptophan synthase alpha chain, found in Shewanella baltica (strain OS155 / ATCC BAA-1091).